Here is a 902-residue protein sequence, read N- to C-terminus: Protein translocase subunit SecA (902 aa).

ATP is bound by residues glutamine 85, 103–107, and aspartate 492; that span reads GEGKT. The segment at 846 to 902 is disordered; the sequence is LSYSGGGEEPNQRPKSPRRRSERKIGPNEPCPCGSGKKFKKCHGRVGAPPLPTSQSQ. Residues cysteine 876, cysteine 878, cysteine 887, and histidine 888 each coordinate Zn(2+).

Belongs to the SecA family. As to quaternary structure, monomer and homodimer. Part of the essential Sec protein translocation apparatus which comprises SecA, SecYEG and auxiliary proteins SecDF. Other proteins may also be involved. Requires Zn(2+) as cofactor.

The protein resides in the cell membrane. It localises to the cytoplasm. The enzyme catalyses ATP + H2O + cellular proteinSide 1 = ADP + phosphate + cellular proteinSide 2.. In terms of biological role, part of the Sec protein translocase complex. Interacts with the SecYEG preprotein conducting channel. Has a central role in coupling the hydrolysis of ATP to the transfer of proteins into and across the cell membrane, serving as an ATP-driven molecular motor driving the stepwise translocation of polypeptide chains across the membrane. The sequence is that of Protein translocase subunit SecA from Rubrobacter xylanophilus (strain DSM 9941 / JCM 11954 / NBRC 16129 / PRD-1).